The primary structure comprises 513 residues: ATP synthase subunit alpha (513 aa).

Residue 169–176 (GDRQTGKT) participates in ATP binding.

This sequence belongs to the ATPase alpha/beta chains family. As to quaternary structure, F-type ATPases have 2 components, CF(1) - the catalytic core - and CF(0) - the membrane proton channel. CF(1) has five subunits: alpha(3), beta(3), gamma(1), delta(1), epsilon(1). CF(0) has three main subunits: a(1), b(2) and c(9-12). The alpha and beta chains form an alternating ring which encloses part of the gamma chain. CF(1) is attached to CF(0) by a central stalk formed by the gamma and epsilon chains, while a peripheral stalk is formed by the delta and b chains.

The protein resides in the cell inner membrane. It carries out the reaction ATP + H2O + 4 H(+)(in) = ADP + phosphate + 5 H(+)(out). Its function is as follows. Produces ATP from ADP in the presence of a proton gradient across the membrane. The alpha chain is a regulatory subunit. In Edwardsiella ictaluri (strain 93-146), this protein is ATP synthase subunit alpha.